A 2485-amino-acid polypeptide reads, in one-letter code: Polyprotein P1234 (2485 aa).

In terms of domain architecture, Alphavirus-like MT spans 28–259; sequence EAKQVTDNDH…EKRDLLRSWH (232 aa). Positions 244 to 263 are nsP1 membrane-binding; sequence GSTIYHEKRDLLRSWHLPSV. C419 carries S-palmitoyl cysteine; by host lipidation. In terms of domain architecture, (+)RNA virus helicase ATP-binding spans 690-841; sequence ELVDPPFHEF…HEICTQVFHK (152 aa). 721–728 contributes to the a ribonucleoside 5'-triphosphate binding site; that stretch reads GVPGSGKS. One can recognise a (+)RNA virus helicase C-terminal domain in the interval 842 to 990; the sequence is SISRRCTKSV…IEEWQAEHDA (149 aa). The Peptidase C9 domain occupies 1003–1322; sequence DVFQNKANVC…STLTNIYTGS (320 aa). The nucleolus localization signal stretch occupies residues 1004-1023; that stretch reads VFQNKANVCWAKALVPVLKT. C1012 functions as the For cysteine protease nsP2 activity in the catalytic mechanism. The short motif at 1056 to 1065 is the Nuclear export signal element; it reads VRFFGLDLDS. The For cysteine protease nsP2 activity role is filled by H1081. The Nuclear localization signal signature appears at 1179–1183; it reads PGKTV. The Macro domain occupies 1328–1489; sequence GCAPSYHVVR…TLKEAVARRE (162 aa). 6 residues coordinate ADP-D-ribose: D1339, N1353, G1361, G1441, I1442, and F1443. Zn(2+)-binding residues include C1596, C1598, C1621, and C1639. The segment at 1783-1810 is disordered; sequence PRTVFRNPPQPAPRTRTPSLAPSRASSR. The span at 1798-1810 shows a compositional bias: polar residues; sequence RTPSLAPSRASSR. A run of 2 repeats spans residues 1810-1831 and 1844-1865. The tract at residues 1810-1865 is 2 X 21 AA approximate repeats, binding to host FXR family members; the sequence is RISLVSNPPGVNRVITREELEALTPSRAPSRSVSRTSLVSNPPGVNRVITREEFEA. Residues 2242 to 2357 enclose the RdRp catalytic domain; sequence DCVLETDIAS…KGVKSDKLMA (116 aa).

In terms of assembly, interacts with non-structural protein 3. Interacts with RNA-directed RNA polymerase nsP4. Interacts with protease nsP2. interacts with itself. As to quaternary structure, interacts with mRNA-capping enzyme nsP1. Interacts with host DDX1. Interacts with host DDX3. Interacts (via C-terminus) with host FXR1; this interaction inhibits the formation of host stress granules on viral mRNAs and the nsp3-FXR1 complexes bind viral RNAs and probably orchestrate the assembly of viral replication complexes. Interacts (via C-terminus) with host FXR2; this interaction inhibits the formation of host stress granules on viral mRNAs and the nsp3-FXR2 complexes bind viral RNAs and probably orchestrate the assembly of viral replication complexes. Interacts (via C-terminus) with host FMR1; this interaction inhibits the formation of host stress granules on viral mRNAs and the nsp3-FMR1 complexes bind viral RNAs and probably orchestrate the assembly of viral replication complexes. Interacts with mRNA-capping enzyme nsP1. Interacts with protease nsP2. interacts with itself. In terms of assembly, interacts with RNA-directed RNA polymerase nsP4. Interacts with mRNA-capping enzyme nsP1. Interacts with KPNA1/karyopherin-alpha1; this interaction probably allows the active transport of protease nsP2 into the host nucleus. Mg(2+) is required as a cofactor. It depends on Mn(2+) as a cofactor. In terms of processing, specific enzymatic cleavages in vivo yield mature proteins. The processing of the polyprotein is temporally regulated. In early stages (1.7 hpi), P1234 is first cleaved in trans through its nsP2 protease activity, releasing P123' and nsP4, which associate to form the early replication complex. At the same time, P1234 is also cut at the nsP1/nsP2 site early in infection but with lower efficiency. After replication of the viral minus-strand RNAs (4 hpi), the polyproteins are cut at the nsP1/nsP2 and nsP2/nsP3 sites very efficiently, preventing accumulation of P123' and P1234 and allowing the formation of the late replication complex. NsP3'/nsP4 site is not cleaved anymore and P34 is produced rather than nsP4. Post-translationally, specific enzymatic cleavages in vivo yield mature proteins. The processing of the polyprotein is temporally regulated. In early stages (1.7 hpi), P123 is cleaved at the nsP1/nsP2 site with low efficiency. After replication of the viral minus-strand RNAs (4 hpi), the polyproteins are cut at the nsP1/nsP2 and nsP2/nsP3 sites very efficiently, preventing accumulation of P123 and allowing the formation of the late replication complex. Specific enzymatic cleavages in vivo yield mature proteins. The processing of the polyprotein is temporally regulated. In early stages (1.7 hpi), P123' is cleaved at the nsP1/nsP2 site with low efficiency. After replication of the viral minus-strand RNAs (4 hpi), the polyproteins are cut at the nsP1/nsP2 and nsP2/nsP3 sites very efficiently, preventing accumulation of P123' and allowing the formation of the late replication complex. In terms of processing, palmitoylated by host palmitoyltransferases ZDHHC2 and ZDHHC19. Post-translationally, phosphorylated by host on serines and threonines. Ubiquitinated; targets the protein for rapid degradation via the ubiquitin system. Nsp4 is present in extremely low quantities due to low frequency of translation through the amber stop-codon and the degradation by the ubiquitin pathway.

Its subcellular location is the host cytoplasmic vesicle membrane. It localises to the host cell membrane. The protein localises to the host cell projection. The protein resides in the host filopodium. It is found in the host nucleus. Its subcellular location is the host cytoplasm. The catalysed reaction is GTP + S-adenosyl-L-methionine = N(7)-methyl-GTP + S-adenosyl-L-homocysteine. The enzyme catalyses N(7)-methyl-GTP + L-histidyl-[protein] = N(tele)-(N(7)-methylguanosine 5'-phospho)-L-histidyl-[protein] + diphosphate. It carries out the reaction N(tele)-(N(7)-methylguanosine 5'-phospho)-L-histidyl-[protein] + a 5'-end diphospho-(purine-ribonucleoside) in mRNA + H(+) = a 5'-end (N(7)-methyl 5'-triphosphoguanosine)-(purine-ribonucleoside) in mRNA + L-histidyl-[protein]. It catalyses the reaction a 5'-end triphospho-ribonucleoside in mRNA + H2O = a 5'-end diphospho-ribonucleoside in mRNA + phosphate + H(+). The catalysed reaction is a ribonucleoside 5'-triphosphate + H2O = a ribonucleoside 5'-diphosphate + phosphate + H(+). The enzyme catalyses ATP + H2O = ADP + phosphate + H(+). It carries out the reaction RNA(n) + a ribonucleoside 5'-triphosphate = RNA(n+1) + diphosphate. It catalyses the reaction 4-O-(ADP-D-ribosyl)-L-aspartyl-[protein] + H2O = L-aspartyl-[protein] + ADP-D-ribose + H(+). The catalysed reaction is 5-O-(ADP-D-ribosyl)-L-glutamyl-[protein] + H2O = L-glutamyl-[protein] + ADP-D-ribose + H(+). The enzyme catalyses RNA(n) + ATP = RNA(n)-3'-adenine ribonucleotide + diphosphate. It carries out the reaction ADP-alpha-D-ribose 1''-phosphate + H2O = ADP-D-ribose + phosphate. Inhibited by sinefungin. Inactive precursor of the viral replicase, which is activated by cleavages carried out by the viral protease nsP2. Functionally, the early replication complex formed by the polyprotein P123 and nsP4 synthesizes the minus-strand RNAs (antigenome). Polyprotein P123 is a short-lived polyprotein that accumulates during early stage of infection. As soon P123 is cleaved into mature proteins, the plus-strand RNAs synthesis begins. Its function is as follows. The early replication complex formed by the polyprotein P123' and nsP4 synthesizes minus-strand RNAs (antigenome). Polyprotein P123' is a short-lived polyprotein that accumulates during early stage of infection. As soon P123' is cleaved into mature proteins, the plus-strand RNAs synthesis begins. In terms of biological role, cytoplasmic capping enzyme that catalyzes two virus-specific reactions: methyltransferase and nsP1 guanylyltransferase. mRNA-capping is necessary since all viral RNAs are synthesized in the cytoplasm, and host capping enzymes are restricted to the nucleus. The enzymatic reaction involves a covalent link between 7-methyl-GMP and nsP1, whereas eukaryotic capping enzymes form a covalent complex only with GMP. NsP1 capping consists in the following reactions: GTP is first methylated into 7-methyl-GMP and then is covalently linked to nsP1 to form the m7GMp-nsP1 complex from which 7-methyl-GMP complex is transferred to the mRNA to create the cap structure. NsP1 is also needed for the initiation of the minus-strand RNAs synthesis. Probably serves as a membrane anchor for the replication complex composed of nsP1-nsP4. Nsp1 is needed for the initiation of the minus-strand RNAs synthesis. Palmitoylated nsP1 is remodeling host cell cytoskeleton, and induces filopodium-like structure formation at the surface of the host cell. Multifunctional protein whose N-terminus is part of the RNA polymerase complex and displays NTPase, RNA triphosphatase and helicase activities. NTPase and RNA triphosphatase are involved in viral RNA capping and helicase keeps a check on the dsRNA replication intermediates. The C-terminus harbors a protease that specifically cleaves the polyproteins and releases the mature proteins. Required for the shutoff of minus-strand RNAs synthesis. Inhibits host translation to ensure maximal viral gene expression and evade host immune response. Functionally, seems to be essential for minus-strand RNAs and subgenomic 26S mRNAs synthesis. Displays mono-ADP-ribosylhydrolase activity. ADP-ribosylation is a post-translational modification that controls various processes of the host cell and the virus probably needs to revert it for optimal viral replication. Binds proteins of FXR family and sequesters them into the viral RNA replication complexes thereby inhibiting the formation of host stress granules on viral mRNAs. The nsp3-FXR complexes bind viral RNAs and probably orchestrate the assembly of viral replication complexes, thanks to the ability of FXR family members to self-assemble and bind DNA. Its function is as follows. Seems to be essential for minus-strand RNAs and subgenomic 26S mRNAs synthesis. Displays mono-ADP-ribosylhydrolase activity. ADP-ribosylation is a post-translational modification that controls various processes of the host cell and the virus probably needs to revert it for optimal viral replication. Binds proteins of FXR family and sequesters them into the viral RNA replication complexes thereby inhibiting the formation of host stress granules on viral mRNAs. The nsp3'-FXR complexes bind viral RNAs and probably orchestrate the assembly of viral replication complexes, thanks to the ability of FXR family members to self-assemble and bind DNA. In terms of biological role, RNA dependent RNA polymerase. Replicates genomic and antigenomic RNA by recognizing replications specific signals. The early replication complex formed by the polyprotein P123 and nsP4 synthesizes minus-strand RNAs. The late replication complex composed of fully processed nsP1-nsP4 is responsible for the production of genomic and subgenomic plus-strand RNAs. The chain is Polyprotein P1234 from Venezuelan equine encephalitis virus (strain 3880) (VEEV).